The primary structure comprises 118 residues: Ribosome-binding factor A (118 aa).

The protein belongs to the RbfA family. As to quaternary structure, monomer. Binds 30S ribosomal subunits, but not 50S ribosomal subunits or 70S ribosomes.

Its subcellular location is the cytoplasm. Its function is as follows. One of several proteins that assist in the late maturation steps of the functional core of the 30S ribosomal subunit. Associates with free 30S ribosomal subunits (but not with 30S subunits that are part of 70S ribosomes or polysomes). Required for efficient processing of 16S rRNA. May interact with the 5'-terminal helix region of 16S rRNA. The polypeptide is Ribosome-binding factor A (Bacillus cereus (strain AH187)).